The chain runs to 75 residues: Cytochrome c oxidase subunit 6C (75 aa).

Residues 1-13 are Mitochondrial matrix-facing; it reads MAPEVLPKPQMRG. Residues 14 to 54 form a helical membrane-spanning segment; that stretch reads LLAKRLRFHMVTAFVLSLGVAALYKFRVADKRKKAYADFYR. Residues 55–75 lie on the Mitochondrial intermembrane side of the membrane; the sequence is NYDAMKDFEEMRKAGIFQSVK.

It belongs to the cytochrome c oxidase subunit 6c family. In terms of assembly, component of the cytochrome c oxidase (complex IV, CIV), a multisubunit enzyme composed of 14 subunits. The complex is composed of a catalytic core of 3 subunits MT-CO1, MT-CO2 and MT-CO3, encoded in the mitochondrial DNA, and 11 supernumerary subunits COX4I, COX5A, COX5B, COX6A, COX6B, COX6C, COX7A, COX7B, COX7C, COX8 and NDUFA4, which are encoded in the nuclear genome. The complex exists as a monomer or a dimer and forms supercomplexes (SCs) in the inner mitochondrial membrane with NADH-ubiquinone oxidoreductase (complex I, CI) and ubiquinol-cytochrome c oxidoreductase (cytochrome b-c1 complex, complex III, CIII), resulting in different assemblies (supercomplex SCI(1)III(2)IV(1) and megacomplex MCI(2)III(2)IV(2)).

Its subcellular location is the mitochondrion inner membrane. Its pathway is energy metabolism; oxidative phosphorylation. In terms of biological role, component of the cytochrome c oxidase, the last enzyme in the mitochondrial electron transport chain which drives oxidative phosphorylation. The respiratory chain contains 3 multisubunit complexes succinate dehydrogenase (complex II, CII), ubiquinol-cytochrome c oxidoreductase (cytochrome b-c1 complex, complex III, CIII) and cytochrome c oxidase (complex IV, CIV), that cooperate to transfer electrons derived from NADH and succinate to molecular oxygen, creating an electrochemical gradient over the inner membrane that drives transmembrane transport and the ATP synthase. Cytochrome c oxidase is the component of the respiratory chain that catalyzes the reduction of oxygen to water. Electrons originating from reduced cytochrome c in the intermembrane space (IMS) are transferred via the dinuclear copper A center (CU(A)) of subunit 2 and heme A of subunit 1 to the active site in subunit 1, a binuclear center (BNC) formed by heme A3 and copper B (CU(B)). The BNC reduces molecular oxygen to 2 water molecules using 4 electrons from cytochrome c in the IMS and 4 protons from the mitochondrial matrix. In Trachypithecus cristatus (Silvered leaf-monkey), this protein is Cytochrome c oxidase subunit 6C (COX6C).